The following is a 114-amino-acid chain: Protachykinin (114 aa).

The N-terminal stretch at 1 to 19 is a signal peptide; sequence MKFLLPSIVIFLVLCQVFG. Positions 20 to 55 are excised as a propeptide; sequence EELGPKEDLDYWTGSNQVQDEWLQADPFREIIRRMT. 2 positions are modified to methionine amide: M67 and M91.

It belongs to the tachykinin family. Expressed in all parts of the brain, with robust expression in the olfactory bulbs and tracts, moderate expression in the hypothalamus and posterior brain, and weak expression in the telencephalon-preoptic region and optic tectum-thalamus. Also expressed in nerve fibers, intestine, testes and pituitary gland. Not expressed in the liver or kidneys.

It localises to the secreted. Functionally, tachykinins are active peptides which excite neurons, evoke behavioral responses, are potent vasodilators and secretagogues, and contract (directly or indirectly) many smooth muscles. Substance P produces a voltage-dependent inhibition of calcium current in retinal bipolar cells. It can enhance learning and memory, may regulate social approach and feeding behaviors, and can accelerate the functional recovery in postural balance in response to light after unilateral labyrinthectomy. The sequence is that of Protachykinin from Carassius auratus (Goldfish).